The following is a 356-amino-acid chain: Glutamate 5-kinase (356 aa).

Lysine 6 provides a ligand contact to ATP. Residues serine 46, aspartate 135, and asparagine 147 each contribute to the substrate site. An ATP-binding site is contributed by 202–208 (TGGMRSK). Residues 265–342 (KGIIVVDRGA…SEVRKLLNTT (78 aa)) form the PUA domain.

This sequence belongs to the glutamate 5-kinase family.

It localises to the cytoplasm. It carries out the reaction L-glutamate + ATP = L-glutamyl 5-phosphate + ADP. The protein operates within amino-acid biosynthesis; L-proline biosynthesis; L-glutamate 5-semialdehyde from L-glutamate: step 1/2. Its function is as follows. Catalyzes the transfer of a phosphate group to glutamate to form L-glutamate 5-phosphate. This Aquifex aeolicus (strain VF5) protein is Glutamate 5-kinase.